The sequence spans 117 residues: Immunoglobulin kappa variable 1D-16 (117 aa).

The N-terminal stretch at 1–22 (MDMRVLAQLLGLLLLCFPGARC) is a signal peptide. Residues 23-45 (DIQMTQSPSSLSASVGDRVTITC) are framework-1. The region spanning 24 to 117 (IQMTQSPSSL…YYCQQYNSYP (94 aa)) is the Ig-like domain. Residues C45 and C110 are joined by a disulfide bond. The segment at 46 to 56 (RASQGISSWLA) is complementarity-determining-1. The segment at 57–71 (WYQQKPEKAPKSLIY) is framework-2. Positions 72–78 (AASSLQS) are complementarity-determining-2. Positions 79–110 (GVPSRFSGSGSGTDFTLTISSLQPEDFATYYC) are framework-3. The interval 111-117 (QQYNSYP) is complementarity-determining-3.

In terms of assembly, immunoglobulins are composed of two identical heavy chains and two identical light chains; disulfide-linked.

The protein resides in the secreted. The protein localises to the cell membrane. V region of the variable domain of immunoglobulin light chains that participates in the antigen recognition. Immunoglobulins, also known as antibodies, are membrane-bound or secreted glycoproteins produced by B lymphocytes. In the recognition phase of humoral immunity, the membrane-bound immunoglobulins serve as receptors which, upon binding of a specific antigen, trigger the clonal expansion and differentiation of B lymphocytes into immunoglobulins-secreting plasma cells. Secreted immunoglobulins mediate the effector phase of humoral immunity, which results in the elimination of bound antigens. The antigen binding site is formed by the variable domain of one heavy chain, together with that of its associated light chain. Thus, each immunoglobulin has two antigen binding sites with remarkable affinity for a particular antigen. The variable domains are assembled by a process called V-(D)-J rearrangement and can then be subjected to somatic hypermutations which, after exposure to antigen and selection, allow affinity maturation for a particular antigen. The sequence is that of Immunoglobulin kappa variable 1D-16 from Homo sapiens (Human).